The chain runs to 357 residues: Alanine racemase (357 aa).

Lysine 35 acts as the Proton acceptor; specific for D-alanine in catalysis. Position 35 is an N6-(pyridoxal phosphate)lysine (lysine 35). Residue arginine 131 coordinates substrate. Tyrosine 256 serves as the catalytic Proton acceptor; specific for L-alanine. Residue methionine 304 participates in substrate binding.

The protein belongs to the alanine racemase family. Pyridoxal 5'-phosphate serves as cofactor.

It catalyses the reaction L-alanine = D-alanine. It participates in amino-acid biosynthesis; D-alanine biosynthesis; D-alanine from L-alanine: step 1/1. Functionally, catalyzes the interconversion of L-alanine and D-alanine. May also act on other amino acids. The protein is Alanine racemase (alr) of Legionella pneumophila (strain Lens).